The sequence spans 259 residues: Thiazole synthase (259 aa).

The Schiff-base intermediate with DXP role is filled by Lys95. 1-deoxy-D-xylulose 5-phosphate-binding positions include Gly156, 183-184 (AG), and 205-206 (NS).

Belongs to the ThiG family. Homotetramer. Forms heterodimers with either ThiH or ThiS.

The protein localises to the cytoplasm. It catalyses the reaction [ThiS sulfur-carrier protein]-C-terminal-Gly-aminoethanethioate + 2-iminoacetate + 1-deoxy-D-xylulose 5-phosphate = [ThiS sulfur-carrier protein]-C-terminal Gly-Gly + 2-[(2R,5Z)-2-carboxy-4-methylthiazol-5(2H)-ylidene]ethyl phosphate + 2 H2O + H(+). The protein operates within cofactor biosynthesis; thiamine diphosphate biosynthesis. In terms of biological role, catalyzes the rearrangement of 1-deoxy-D-xylulose 5-phosphate (DXP) to produce the thiazole phosphate moiety of thiamine. Sulfur is provided by the thiocarboxylate moiety of the carrier protein ThiS. In vitro, sulfur can be provided by H(2)S. In Coxiella burnetii (strain CbuK_Q154) (Coxiella burnetii (strain Q154)), this protein is Thiazole synthase.